Reading from the N-terminus, the 436-residue chain is MPIYIDRRLNPKDKSLGNRQRFLKRAREELKRTIKEQVRAGKITDVDAEHRVPMPARGTSEPTFRPDRSSGERGYILPGNKEFAPGDRLPKPGASGGEGGTGAGRGGSDDDFQFVLSREEVLDLFFEDLELPDMVKLNLKEAVAYRPRRAGFATSGSPTNINVGRTMRNSYGRRIALHRPKRQEVERLEAEIARLEVESDKLGGKQLEALRAELESLERKRRRIPYVDPIDIRFNRFEQQPLPNASAVMFCLMDVSSSMGEREKDLAKRFFVLLHLFLKRRYERIDIVFIRHTHEAREVDEETFFYSTQSGGTVVSTALEEMQRIIAERYPSREWNIYAAQASDGDNIAGDSERCASMLRDELMQLCQYYAYVEIIDERETEIFGATDNGTSLWRAYRTVGDQWPNFQMTRIARPADIYPVFRKLFARQSASPTRR.

A disordered region spans residues 53–110; that stretch reads PMPARGTSEPTFRPDRSSGERGYILPGNKEFAPGDRLPKPGASGGEGGTGAGRGGSDD. The span at 94-106 shows a compositional bias: gly residues; it reads ASGGEGGTGAGRG.

The protein belongs to the UPF0229 family.

This is UPF0229 protein Meso_0256 from Chelativorans sp. (strain BNC1).